A 338-amino-acid chain; its full sequence is Tryptophan--tRNA ligase (338 aa).

Residues 11–13 (QPS) and 19–20 (GN) contribute to the ATP site. A 'HIGH' region motif is present at residues 12–20 (PSGELSIGN). D135 contributes to the L-tryptophan binding site. Residues 147-149 (GSD), V189, and 198-202 (KMSKS) contribute to the ATP site. The 'KMSKS' region signature appears at 198-202 (KMSKS).

It belongs to the class-I aminoacyl-tRNA synthetase family. Homodimer.

It is found in the cytoplasm. It catalyses the reaction tRNA(Trp) + L-tryptophan + ATP = L-tryptophyl-tRNA(Trp) + AMP + diphosphate + H(+). In terms of biological role, catalyzes the attachment of tryptophan to tRNA(Trp). The polypeptide is Tryptophan--tRNA ligase (Vibrio parahaemolyticus serotype O3:K6 (strain RIMD 2210633)).